The following is a 464-amino-acid chain: Vitamin D3 hydroxylase-associated protein (464 aa).

Active-site charge relay system residues include lysine 150 and serine 225. Serine 249 serves as the catalytic Acyl-ester intermediate.

The protein belongs to the amidase family. Kidney.

The protein resides in the mitochondrion inner membrane. Functionally, may have a vitamin D3 hydroxylase regulatory function. The polypeptide is Vitamin D3 hydroxylase-associated protein (Gallus gallus (Chicken)).